A 449-amino-acid chain; its full sequence is MLETPKVLLKNLQDCKIHFIGIGGIGISGLAKYLKAQGAKISGSDIAISPSVKYLKALGVEINIPHDPKAINHQDVIIHSAIIKEDNKEIQRAKELKIPILSRKDALYSILKDKRVFSVCGAHGKSSITAMLSAICPFFGAIIGAHSKEFDSNVRESANDSLVFEADESDSSFLFSNPYAAIVPNTEPEHLEHYGHDLERFFFAYEYFLDHAQKRVIYKEDPFLKSYSKDAIVLEKKDIYNIQYILKDGEPYTSFELKDLGAFLVWGLGEHNATNASLAILSALDELNLEEIRNNLLNFKGIKKRFDILQKNALILIDDYAHHPTEISATLKSARIYANLLDTQEQIIVIWQAHKYSRLMDNLEEFKKCFLEHCDRLIILPVYSASEVKRDIDLKTHFKHYNPTFIDRVRKKGDFLELLVNDNVVETIEKGFVIGFGAGDITYQLRGEM.

121 to 127 is a binding site for ATP; sequence GAHGKSS.

The protein belongs to the MurCDEF family.

Its subcellular location is the cytoplasm. It catalyses the reaction UDP-N-acetyl-alpha-D-muramate + L-alanine + ATP = UDP-N-acetyl-alpha-D-muramoyl-L-alanine + ADP + phosphate + H(+). It participates in cell wall biogenesis; peptidoglycan biosynthesis. In terms of biological role, cell wall formation. This Helicobacter pylori (strain HPAG1) protein is UDP-N-acetylmuramate--L-alanine ligase.